We begin with the raw amino-acid sequence, 310 residues long: GILSTVRATREASFENLYDKSKKLLDYMLLHGVTTVEAKSGYGLDWETEKRQLDVVGALDRDHDIDLVSTFMAAHAVPPEYKGRSQEYLELIVEEMLPRVKAENLAEFCDIFCEKGVFTADESRYLLSKAKEMGFKLRIHADEMESIGGVDVAAELGATSAEHLMMATDEGIRKMAEAKVIGNLLPATTFSLMEDTYAPARKMLEAGMAITLTTDSNPGSCPTANLQFVMQLGCFMCALTPVEVLNAVTINAAYSVNRQDKIGSFDTGKQADITILDAKNIDYPLYFFATNLTHQVYKAGKLVVDQGRIV.

Positions 42 and 75 each coordinate 4-imidazolone-5-propanoate. Position 42 (Tyr-42) interacts with N-formimidoyl-L-glutamate. Position 140 (His-140) interacts with Fe(3+). His-140 contributes to the Zn(2+) binding site. Glu-143 contacts 4-imidazolone-5-propanoate. Asp-215 lines the Fe(3+) pocket. Asp-215 provides a ligand contact to Zn(2+). Asn-217 and Gly-219 together coordinate N-formimidoyl-L-glutamate. Residue Ser-220 participates in 4-imidazolone-5-propanoate binding.

This sequence belongs to the metallo-dependent hydrolases superfamily. HutI family. Zn(2+) is required as a cofactor. It depends on Fe(3+) as a cofactor.

It is found in the cytoplasm. The enzyme catalyses 4-imidazolone-5-propanoate + H2O = N-formimidoyl-L-glutamate. It functions in the pathway amino-acid degradation; L-histidine degradation into L-glutamate; N-formimidoyl-L-glutamate from L-histidine: step 3/3. In terms of biological role, catalyzes the hydrolytic cleavage of the carbon-nitrogen bond in imidazolone-5-propanoate to yield N-formimidoyl-L-glutamate. It is the third step in the universal histidine degradation pathway. The protein is Imidazolonepropionase (hutI) of Streptococcus gordonii.